A 473-amino-acid polypeptide reads, in one-letter code: 3-oxoacyl-[acyl-carrier-protein] synthase I, chloroplastic (473 aa).

Residues 1 to 10 (MQALQSSSLR) are compositionally biased toward polar residues. The disordered stretch occupies residues 1–26 (MQALQSSSLRASPPNPLRLPSNRQSH). Residues 1–46 (MQALQSSSLRASPPNPLRLPSNRQSHQLITNARPLRRQQRSFISAS) constitute a chloroplast transit peptide. A Ketosynthase family 3 (KS3) domain is found at 60-470 (KKRVVITGMG…GHNSVVAFSA (411 aa)). Active-site for beta-ketoacyl synthase activity residues include C224, H364, and H400.

The protein belongs to the thiolase-like superfamily. Beta-ketoacyl-ACP synthases family. As to quaternary structure, homodimer.

Its subcellular location is the plastid. It is found in the chloroplast stroma. It carries out the reaction a fatty acyl-[ACP] + malonyl-[ACP] + H(+) = a 3-oxoacyl-[ACP] + holo-[ACP] + CO2. Functionally, catalyzes the condensation reaction of fatty acid synthesis by the addition to an acyl acceptor of two carbons from malonyl-ACP. Specific for elongation from C-10 to unsaturated C-16 and C-18 fatty acids. This Arabidopsis thaliana (Mouse-ear cress) protein is 3-oxoacyl-[acyl-carrier-protein] synthase I, chloroplastic (KAS1).